A 570-amino-acid chain; its full sequence is Phosphocholine hydrolase Lem3 (570 aa).

The protein resides in the secreted. It localises to the host cytoplasm. It carries out the reaction [Rab1 protein]-O-phosphocholine-L-serine + H2O = [Rab1 protein]-L-serine + phosphocholine + H(+). Functionally, virulence effector that plays a role in hijacking the host vesicular trafficking by recruiting the small guanosine triphosphatase (GTPase) Rab1 to the cytosolic face of the Legionella-containing vacuole (LCVs). Acts as a phosphocholine hydrolase by mediating the hydrolysis of phosphocholine to Ser residues of host RAB1 (RAB1A, RAB1B or RAB1C). Dephosphocholination of target proteins restores accessibility to GTPase effector LepB. Can act on both GDP-bound and GTP-bound Rab proteins. The polypeptide is Phosphocholine hydrolase Lem3 (lem3) (Legionella pneumophila subsp. pneumophila (strain Philadelphia 1 / ATCC 33152 / DSM 7513)).